The chain runs to 93 residues: Guanine nucleotide-binding protein subunit gamma 1 (93 aa).

Positions 12 to 52 (TRGRHRIQAELKKLEQEARFLEEELEELDKTDKVSAALQEL) form a coiled coil. Positions 20–93 (AELKKLEQEA…DLRRCKCWFL (74 aa)) constitute a G protein gamma domain. Cys-88 carries S-palmitoyl cysteine lipidation. At Cys-90 the chain carries Cysteine methyl ester. Residue Cys-90 is the site of S-farnesyl cysteine attachment. Residues 91–93 (WFL) constitute a propeptide, removed in mature form.

G proteins are composed of 3 units, alpha, beta and gamma. Interacts with the beta subunit RGB1.

It is found in the cell membrane. In terms of biological role, guanine nucleotide-binding proteins (G proteins) are involved as modulators or transducers in various transmembrane signaling systems. The polypeptide is Guanine nucleotide-binding protein subunit gamma 1 (Oryza sativa subsp. indica (Rice)).